We begin with the raw amino-acid sequence, 145 residues long: Large ribosomal subunit protein uL11 (145 aa).

The protein belongs to the universal ribosomal protein uL11 family. In terms of assembly, part of the ribosomal stalk of the 50S ribosomal subunit. Interacts with L10 and the large rRNA to form the base of the stalk. L10 forms an elongated spine to which L12 dimers bind in a sequential fashion forming a multimeric L10(L12)X complex. One or more lysine residues are methylated.

Its function is as follows. Forms part of the ribosomal stalk which helps the ribosome interact with GTP-bound translation factors. The polypeptide is Large ribosomal subunit protein uL11 (Porphyromonas gingivalis (strain ATCC 33277 / DSM 20709 / CIP 103683 / JCM 12257 / NCTC 11834 / 2561)).